Reading from the N-terminus, the 306-residue chain is Protein SULFUR DEFICIENCY-INDUCED 1 (306 aa).

5 TPR repeats span residues 1-22 (MERS…NLMK), 71-104 (DSAL…CSKN), 107-140 (DSLD…IYQG), 167-200 (SRLL…EPDA), and 202-233 (KSCN…RVLG). Residues 72–139 (SALKDMAVVM…LKRKLRQIYQ (68 aa)) adopt a coiled-coil conformation. Residues 238 to 260 (RTRQRAEELLSELESSLPRMRDA) are a coiled coil. One copy of the TPR 6 repeat lies at 270–304 (LDDDFVLGLEEMTSTSFKSKRLPIFEQISSFRNTL).

This sequence belongs to the MS5 protein family.

The protein resides in the nucleus. Functionally, involved in the utilization of stored sulfate under sulfur-deficient conditions. This is Protein SULFUR DEFICIENCY-INDUCED 1 from Arabidopsis thaliana (Mouse-ear cress).